A 118-amino-acid polypeptide reads, in one-letter code: Small ribosomal subunit protein uS13 (118 aa).

The tract at residues S94–R118 is disordered.

Belongs to the universal ribosomal protein uS13 family. As to quaternary structure, part of the 30S ribosomal subunit. Forms a loose heterodimer with protein S19. Forms two bridges to the 50S subunit in the 70S ribosome.

Located at the top of the head of the 30S subunit, it contacts several helices of the 16S rRNA. In the 70S ribosome it contacts the 23S rRNA (bridge B1a) and protein L5 of the 50S subunit (bridge B1b), connecting the 2 subunits; these bridges are implicated in subunit movement. Contacts the tRNAs in the A and P-sites. The chain is Small ribosomal subunit protein uS13 from Dichelobacter nodosus (strain VCS1703A).